Reading from the N-terminus, the 311-residue chain is NEDD4 family-interacting protein 2 (311 aa).

Residues 1–133 (RRSASDAELS…PPYSSITVEA (133 aa)) form a disordered region. Over 1-206 (RRSASDAELS…VEQLRVGNDG (206 aa)) the chain is Cytoplasmic. Over residues 7-22 (AELSAGAEGATGSEAA) the composition is skewed to low complexity. Gly residues predominate over residues 26-37 (DLGGRTRGGGRG). Residues 38–47 (SAAAAATTST) show a composition bias toward low complexity. Basic and acidic residues predominate over residues 48 to 75 (REAEGAERRGDTPARKPDPEAGRMDHHQ). Polar residues predominate over residues 92 to 101 (ESSAVEQPST). Positions 102–120 (SSLAAPTVEAAASAPALDP) are enriched in low complexity. Residues 123 to 126 (PPPY) are interaction with NEDD4. The PPxY motif 1 motif lies at 123–126 (PPPY). Phosphotyrosine; by SRC is present on residues Tyr-126, Tyr-142, Tyr-146, and Tyr-152. 2 consecutive short sequence motifs (PPxY motif) follow at residues 149-152 (PPPY) and 159-161 (PTY). A helical membrane pass occupies residues 207-227 (IFMLAFFMAFIFNWLGFCLSF). Residues 228-232 (CITNT) are Extracellular-facing. The helical transmembrane segment at 233-253 (IAGRYGAICGFGLSLIKWILI) threads the bilayer. Topologically, residues 254 to 262 (VRFSDYFTG) are cytoplasmic. The chain crosses the membrane as a helical span at residues 263–283 (YFNGQYWLWWIFLVLGLLLFF). The Extracellular segment spans residues 284-311 (RGFVNYLKVRNMSESMAAAHRTRYFFLL).

In terms of assembly, forms heterodimers with NDFIP1. Interacts with HECT domain-containing E3 ubiquitin-protein ligases, including NEDD4. Interacts with NEDD4L. When phosphorylated at Tyr-142, interacts with SRC and LYN SH2 domain. May thus act as a scaffold that recruits SRC to NDFIP1, enhancing NDFIP1 phosphorylation. Interacts with SLC11A2/DMT1. May interact with phosphorylated EGFR. Interacts with KCNH2. In terms of processing, ubiquitinated by NEDD4 and NEDD4L; which does not affect turnover. Also ubiquitinated by ITCH. Post-translationally, undergoes transient tyrosine-phosphorylation following EGF stimulation, most probably catalyzed by SRC. Phosphorylation on Tyr-126, Tyr-146 and Tyr-152 are dependent on the phosphorylation on Tyr-142. Also phosphorylated by LYN and FYN. Ubiquitously expressed, with highest levels in brain, liver, kidney and testis.

The protein resides in the endosome membrane. It localises to the golgi apparatus membrane. Its subcellular location is the endosome. It is found in the multivesicular body membrane. In terms of biological role, activates HECT domain-containing E3 ubiquitin-protein ligases, including ITCH, NEDD4, NEDD4L, SMURF2, WWP1 and WWP2, and consequently modulates the stability of their targets. As a result, may control many cellular processes. Recruits ITCH, NEDD4 and SMURF2 to endosomal membranes. Negatively regulates KCNH2 potassium channel activity by decreasing its cell-surface expression and interfering with channel maturation through recruitment of NEDD4L to the Golgi apparatus and multivesicular body where it mediates KCNH2 degradation. May modulate EGFR signaling. Together with NDFIP1, limits the cytokine signaling and expansion of effector Th2 T-cells by promoting degradation of JAK1, probably by ITCH- and NEDD4L-mediated ubiquitination. This is NEDD4 family-interacting protein 2 (Ndfip2) from Mus musculus (Mouse).